The following is a 132-amino-acid chain: Dormancy-associated protein 1 (132 aa).

The segment at 53–76 (MPAAVSPGTPTTPTTPTTPRKDNV) is disordered. Over residues 61–70 (TPTTPTTPTT) the composition is skewed to low complexity. Residue Thr-64 is modified to Phosphothreonine.

It belongs to the DRM1/ARP family. As to expression, isoform 1: Expressed mainly in the low bolt. Isoform 2: Expressed mainly in the low bolt. Detected in flowers. Isoform 4: Expressed mainly in the low bolt. Isoform 5: Expressed mainly in the 6 days old seedlings. Detected in 16 days old seedlings, axil, low bolt and floral samples, but only barely in leaves and top bolt.

The polypeptide is Dormancy-associated protein 1 (Arabidopsis thaliana (Mouse-ear cress)).